The chain runs to 250 residues: Proteasome subunit alpha (250 aa).

It belongs to the peptidase T1A family. In terms of assembly, the 20S proteasome core is composed of 14 alpha and 14 beta subunits that assemble into four stacked heptameric rings, resulting in a barrel-shaped structure. The two inner rings, each composed of seven catalytic beta subunits, are sandwiched by two outer rings, each composed of seven alpha subunits. The catalytic chamber with the active sites is on the inside of the barrel. Has a gated structure, the ends of the cylinder being occluded by the N-termini of the alpha-subunits. Is capped at one or both ends by the proteasome regulatory ATPase, PAN.

The protein localises to the cytoplasm. Its activity is regulated as follows. The formation of the proteasomal ATPase PAN-20S proteasome complex, via the docking of the C-termini of PAN into the intersubunit pockets in the alpha-rings, triggers opening of the gate for substrate entry. Interconversion between the open-gate and close-gate conformations leads to a dynamic regulation of the 20S proteasome proteolysis activity. In terms of biological role, component of the proteasome core, a large protease complex with broad specificity involved in protein degradation. The sequence is that of Proteasome subunit alpha from Haloquadratum walsbyi (strain DSM 16790 / HBSQ001).